The chain runs to 150 residues: UPF0506 protein SJCHGC02380 (150 aa).

Positions 1–18 (MNTCIQLLILCLVTVINS) are cleaved as a signal peptide. Asn20, Asn24, Asn36, Asn48, Asn52, and Asn110 each carry an N-linked (GlcNAc...) asparagine glycan. 3 disulfide bridges follow: Cys116/Cys130, Cys123/Cys134, and Cys129/Cys139.

It belongs to the UPF0506 family.

The protein resides in the secreted. This Schistosoma japonicum (Blood fluke) protein is UPF0506 protein SJCHGC02380.